The primary structure comprises 239 residues: Large ribosomal subunit protein uL1 (239 aa).

The protein belongs to the universal ribosomal protein uL1 family. Part of the 50S ribosomal subunit.

Binds directly to 23S rRNA. The L1 stalk is quite mobile in the ribosome, and is involved in E site tRNA release. In terms of biological role, protein L1 is also a translational repressor protein, it controls the translation of the L11 operon by binding to its mRNA. The polypeptide is Large ribosomal subunit protein uL1 (Rickettsia africae (strain ESF-5)).